A 186-amino-acid chain; its full sequence is ADP-ribosylation factor-like protein 6 (186 aa).

Gly-2 carries the N-myristoyl glycine lipid modification. Residues 24-31 (GLDNSGKT), Thr-50, 69-73 (DMSGQ), Gly-72, 130-133 (NKMD), and Ala-164 each bind GTP. Thr-50 is a binding site for Mg(2+).

This sequence belongs to the small GTPase superfamily. Arf family. Expressed in brain, heart and eye. Isoform 2 is expressed only in the retina.

The protein localises to the cell projection. Its subcellular location is the cilium membrane. The protein resides in the cytoplasm. It is found in the cytoskeleton. It localises to the cilium axoneme. The protein localises to the cilium basal body. In terms of biological role, probably involved in membrane protein trafficking at the base of the ciliary organelle. May function in cilia biogenesis. Isoform 2 is required for proper retinal function and organization. The protein is ADP-ribosylation factor-like protein 6 (arl6) of Danio rerio (Zebrafish).